Reading from the N-terminus, the 610-residue chain is UvrABC system protein C (610 aa).

One can recognise a GIY-YIG domain in the interval 16–94 (SQPGVYRMYD…IKLYQPRYNV (79 aa)). Positions 204–239 (DQVLTQLISRMETASQNLEFEEAARIRDQIQAVRRV) constitute a UVR domain.

Belongs to the UvrC family. As to quaternary structure, interacts with UvrB in an incision complex.

The protein resides in the cytoplasm. Its function is as follows. The UvrABC repair system catalyzes the recognition and processing of DNA lesions. UvrC both incises the 5' and 3' sides of the lesion. The N-terminal half is responsible for the 3' incision and the C-terminal half is responsible for the 5' incision. In Shigella boydii serotype 18 (strain CDC 3083-94 / BS512), this protein is UvrABC system protein C.